The sequence spans 460 residues: Tol-Pal system protein TolB (460 aa).

A signal peptide spans methionine 1 to serine 22.

Belongs to the TolB family. In terms of assembly, the Tol-Pal system is composed of five core proteins: the inner membrane proteins TolA, TolQ and TolR, the periplasmic protein TolB and the outer membrane protein Pal. They form a network linking the inner and outer membranes and the peptidoglycan layer.

It localises to the periplasm. Part of the Tol-Pal system, which plays a role in outer membrane invagination during cell division and is important for maintaining outer membrane integrity. TolB occupies a key intermediary position in the Tol-Pal system because it communicates directly with both membrane-embedded components, Pal in the outer membrane and TolA in the inner membrane. The protein is Tol-Pal system protein TolB of Blochmanniella floridana.